Here is a 172-residue protein sequence, read N- to C-terminus: Cytochrome c oxidase subunit 4 isoform 2, mitochondrial (172 aa).

The transit peptide at 1–34 (MFSRAARSLVMRTGLRTRGTGTHSPGDAAGSQRR) directs the protein to the mitochondrion. Low complexity predominate over residues 13 to 22 (TGLRTRGTGT). The interval 13 to 32 (TGLRTRGTGTHSPGDAAGSQ) is disordered. The Mitochondrial matrix portion of the chain corresponds to 35–101 (MTPYVDCYAQ…TFAEMNHRSN (67 aa)). The chain crosses the membrane as a helical span at residues 102–127 (EWKTVMGCVFFFIGFTALVIWWQRVY). The Mitochondrial intermembrane portion of the chain corresponds to 128 to 172 (VFPKKVVTLTEERKAQQLQRLLDMKSNPIQGLAAHWDYEKKEWKK).

This sequence belongs to the cytochrome c oxidase IV family. In terms of assembly, component of the cytochrome c oxidase (complex IV, CIV), a multisubunit enzyme composed of 14 subunits. The complex is composed of a catalytic core of 3 subunits MT-CO1, MT-CO2 and MT-CO3, encoded in the mitochondrial DNA, and 11 supernumerary subunits COX4I, COX5A, COX5B, COX6A, COX6B, COX6C, COX7A, COX7B, COX7C, COX8 and NDUFA4, which are encoded in the nuclear genome. The complex exists as a monomer or a dimer and forms supercomplexes (SCs) in the inner mitochondrial membrane with NADH-ubiquinone oxidoreductase (complex I, CI) and ubiquinol-cytochrome c oxidoreductase (cytochrome b-c1 complex, complex III, CIII), resulting in different assemblies (supercomplex SCI(1)III(2)IV(1) and megacomplex MCI(2)III(2)IV(2)).

The protein localises to the mitochondrion inner membrane. The protein operates within energy metabolism; oxidative phosphorylation. In terms of biological role, component of the cytochrome c oxidase, the last enzyme in the mitochondrial electron transport chain which drives oxidative phosphorylation. The respiratory chain contains 3 multisubunit complexes succinate dehydrogenase (complex II, CII), ubiquinol-cytochrome c oxidoreductase (cytochrome b-c1 complex, complex III, CIII) and cytochrome c oxidase (complex IV, CIV), that cooperate to transfer electrons derived from NADH and succinate to molecular oxygen, creating an electrochemical gradient over the inner membrane that drives transmembrane transport and the ATP synthase. Cytochrome c oxidase is the component of the respiratory chain that catalyzes the reduction of oxygen to water. Electrons originating from reduced cytochrome c in the intermembrane space (IMS) are transferred via the dinuclear copper A center (CU(A)) of subunit 2 and heme A of subunit 1 to the active site in subunit 1, a binuclear center (BNC) formed by heme A3 and copper B (CU(B)). The BNC reduces molecular oxygen to 2 water molecules using 4 electrons from cytochrome c in the IMS and 4 protons from the mitochondrial matrix. This is Cytochrome c oxidase subunit 4 isoform 2, mitochondrial (Cox4i2) from Mus musculus (Mouse).